Here is a 96-residue protein sequence, read N- to C-terminus: Cysteine protease immunity 1 (96 aa).

In Escherichia coli O1:K1:H7 (strain ATCC 11775 / DSM 30083 / JCM 1649 / NBRC 102203 / NCTC 9001 / U5/41), this protein is Cysteine protease immunity 1.